Consider the following 443-residue polypeptide: Glutamyl-tRNA reductase (443 aa).

Substrate contacts are provided by residues 55 to 58, Ser113, 118 to 120, and Gln124; these read TCNR and EPQ. Cys56 acts as the Nucleophile in catalysis. 193-198 serves as a coordination point for NADP(+); the sequence is GAGEMI.

Belongs to the glutamyl-tRNA reductase family. Homodimer.

The enzyme catalyses (S)-4-amino-5-oxopentanoate + tRNA(Glu) + NADP(+) = L-glutamyl-tRNA(Glu) + NADPH + H(+). Its pathway is porphyrin-containing compound metabolism; protoporphyrin-IX biosynthesis; 5-aminolevulinate from L-glutamyl-tRNA(Glu): step 1/2. It functions in the pathway porphyrin-containing compound metabolism; chlorophyll biosynthesis. Catalyzes the NADPH-dependent reduction of glutamyl-tRNA(Glu) to glutamate 1-semialdehyde (GSA). The protein is Glutamyl-tRNA reductase of Methylibium petroleiphilum (strain ATCC BAA-1232 / LMG 22953 / PM1).